We begin with the raw amino-acid sequence, 423 residues long: Guanine nucleotide-binding protein subunit beta (423 aa).

7 WD repeats span residues 90 to 120 (GHNN…LIWD), 132 to 162 (LDSQ…TIYR), 179 to 208 (GHTC…ALWD), 220 to 256 (DHLG…YIWD), 268 to 298 (VNDS…NMYD), 348 to 377 (DNQG…VVWD), and 389 to 419 (GHGG…KIWS).

Belongs to the WD repeat G protein beta family. In terms of assembly, g proteins are composed of 3 units, alpha, beta and gamma. The beta-gamma subunit complex (STE4-STE18 complex) interacts with PLP1 and PLP2. Interacts with SYG1.

Its function is as follows. Implicated in the a- and alpha-factor response pathway. The beta and gamma chains of the putative yeast mating response pathway G protein play a positive role in initiation of the mating response. The beta and gamma chains are required for the GTPase activity, for replacement of GDP by GTP, and for G protein-effector interaction. The sequence is that of Guanine nucleotide-binding protein subunit beta (STE4) from Saccharomyces cerevisiae (strain ATCC 204508 / S288c) (Baker's yeast).